The following is a 117-amino-acid chain: Putative membrane protein insertion efficiency factor (117 aa).

This sequence belongs to the UPF0161 family.

It is found in the cell inner membrane. Functionally, could be involved in insertion of integral membrane proteins into the membrane. This chain is Putative membrane protein insertion efficiency factor, found in Nitrobacter winogradskyi (strain ATCC 25391 / DSM 10237 / CIP 104748 / NCIMB 11846 / Nb-255).